The primary structure comprises 335 residues: Fructose-1,6-bisphosphatase class 1 (335 aa).

Glu-92, Asp-114, Leu-116, and Asp-117 together coordinate Mg(2+). Substrate is bound by residues 117-120 (DGSS), Asn-210, Tyr-242, and Lys-274. Glu-280 is a binding site for Mg(2+).

It belongs to the FBPase class 1 family. As to quaternary structure, homotetramer. Requires Mg(2+) as cofactor.

It is found in the cytoplasm. It carries out the reaction beta-D-fructose 1,6-bisphosphate + H2O = beta-D-fructose 6-phosphate + phosphate. It functions in the pathway carbohydrate biosynthesis; gluconeogenesis. The chain is Fructose-1,6-bisphosphatase class 1 from Lawsonia intracellularis (strain PHE/MN1-00).